A 160-amino-acid polypeptide reads, in one-letter code: Phosphopantetheine adenylyltransferase (160 aa).

T10 lines the substrate pocket. ATP-binding positions include 10-11 (TF) and H18. Substrate contacts are provided by K42, L74, and R88. Residues 89–91 (GLR), E99, and 124–130 (NSFISST) contribute to the ATP site.

This sequence belongs to the bacterial CoaD family. In terms of assembly, homohexamer. Mg(2+) is required as a cofactor.

It localises to the cytoplasm. The enzyme catalyses (R)-4'-phosphopantetheine + ATP + H(+) = 3'-dephospho-CoA + diphosphate. Its pathway is cofactor biosynthesis; coenzyme A biosynthesis; CoA from (R)-pantothenate: step 4/5. Its function is as follows. Reversibly transfers an adenylyl group from ATP to 4'-phosphopantetheine, yielding dephospho-CoA (dPCoA) and pyrophosphate. This chain is Phosphopantetheine adenylyltransferase, found in Pseudoalteromonas atlantica (strain T6c / ATCC BAA-1087).